The primary structure comprises 491 residues: Inositol-pentakisphosphate 2-kinase (491 aa).

The short motif at 136–140 (EIKPK) is the EXKPK motif element. Serine 282 carries the phosphoserine modification.

This sequence belongs to the IPK1 type 2 family. As to expression, ubiquitously expressed, with high expression in heart, brain, testis and placenta.

The protein resides in the cytoplasm. Its subcellular location is the nucleus. The catalysed reaction is 1D-myo-inositol 1,3,4,5,6-pentakisphosphate + ATP = 1D-myo-inositol hexakisphosphate + ADP + H(+). Phosphorylates Ins(1,3,4,5,6)P5 at position 2 to form Ins(1,2,3,4,5,6)P6 (InsP6 or phytate). InsP6 is involved in many processes such as mRNA export, non-homologous end-joining, endocytosis, ion channel regulation. It also protects cells from TNF-alpha-induced apoptosis. This is Inositol-pentakisphosphate 2-kinase (IPPK) from Homo sapiens (Human).